Consider the following 530-residue polypeptide: UDP-glucuronosyltransferase 2B14 (530 aa).

Positions 1 to 24 (MSVKHVSVLLLLLQLSCCFRTGSC) are cleaved as a signal peptide. N-linked (GlcNAc...) asparagine glycans are attached at residues asparagine 134 and asparagine 316. A helical membrane pass occupies residues 494–510 (VVGFLVSCAAFLIFLVI).

The protein belongs to the UDP-glycosyltransferase family.

Its subcellular location is the microsome membrane. It localises to the endoplasmic reticulum membrane. The catalysed reaction is glucuronate acceptor + UDP-alpha-D-glucuronate = acceptor beta-D-glucuronoside + UDP + H(+). Its function is as follows. UDPGT is of major importance in the conjugation and subsequent elimination of potentially toxic xenobiotics and endogenous compounds. This is UDP-glucuronosyltransferase 2B14 (UGT2B14) from Oryctolagus cuniculus (Rabbit).